Reading from the N-terminus, the 263-residue chain is H-2 class II histocompatibility antigen, A-S beta chain (263 aa).

The signal sequence occupies residues 1–27; it reads MALQIPSLLLSAAVVVLMVLSSPGTEG. Residues 28–120 are beta-1; it reads GDSERHFVFQ…VETHTSLRRL (93 aa). Topologically, residues 28–224 are extracellular; the sequence is GDSERHFVFQ…RAQSESARSK (197 aa). 2 disulfides stabilise this stretch: Cys42–Cys104 and Cys143–Cys199. Residue Asn46 is glycosylated (N-linked (GlcNAc...) asparagine). Residues 121–214 are beta-2; it reads EQPNVVISLS…SLKSPITVEW (94 aa). The 89-residue stretch at 123–211 folds into the Ig-like C1-type domain; it reads PNVVISLSRT…EHPSLKSPIT (89 aa). The interval 215-224 is connecting peptide; sequence RAQSESARSK. A helical transmembrane segment spans residues 225–245; it reads MLSGIGGCVLGVIFLGLGLFI. Residues 246-263 lie on the Cytoplasmic side of the membrane; the sequence is RHRSQKGPRGPPPAGLLQ.

Belongs to the MHC class II family. Ubiquitinated in immature dendritic cells leading to down-regulation of MHC class II.

The protein resides in the membrane. This is H-2 class II histocompatibility antigen, A-S beta chain (H2-Ab1) from Mus musculus (Mouse).